The chain runs to 149 residues: 18 kDa antigen 1 (149 aa).

Positions 21-131 (TAARPAVMPM…KPRKIAVGRG (111 aa)) constitute a sHSP domain.

It belongs to the small heat shock protein (HSP20) family.

In terms of biological role, not known. This protein is one of the major immune reactive proteins in mycobacteria. The sequence is that of 18 kDa antigen 1 from Mycobacterium intracellulare.